A 59-amino-acid polypeptide reads, in one-letter code: MDKRLLDILVCPLCKSQLHLDANKQELICKADRLAYPIRDDVPVTLVDEARSLSADEIA.

It belongs to the UPF0434 family.

The polypeptide is UPF0434 protein Pnec_0311 (Polynucleobacter necessarius subsp. necessarius (strain STIR1)).